The sequence spans 159 residues: Large ribosomal subunit protein bL17 (159 aa).

A compositionally biased stretch (low complexity) spans 119–138 (PVTPKAKPAKSTAKAAPKSK). The tract at residues 119-159 (PVTPKAKPAKSTAKAAPKSKAPVEETPDEPASEETAEAEAD) is disordered. Residues 143 to 159 (ETPDEPASEETAEAEAD) show a composition bias toward acidic residues.

Belongs to the bacterial ribosomal protein bL17 family. As to quaternary structure, part of the 50S ribosomal subunit. Contacts protein L32.

This is Large ribosomal subunit protein bL17 from Leifsonia xyli subsp. xyli (strain CTCB07).